Reading from the N-terminus, the 504-residue chain is Glutamate--tRNA ligase (504 aa).

Residues 12–22 (PSPTGALHIGG) carry the 'HIGH' region motif. Positions 260 to 264 (KLSKR) match the 'KMSKS' region motif. ATP is bound at residue Lys263.

Belongs to the class-I aminoacyl-tRNA synthetase family. Glutamate--tRNA ligase type 1 subfamily. As to quaternary structure, monomer.

It is found in the cytoplasm. The catalysed reaction is tRNA(Glu) + L-glutamate + ATP = L-glutamyl-tRNA(Glu) + AMP + diphosphate. Catalyzes the attachment of glutamate to tRNA(Glu) in a two-step reaction: glutamate is first activated by ATP to form Glu-AMP and then transferred to the acceptor end of tRNA(Glu). In Bacteroides thetaiotaomicron (strain ATCC 29148 / DSM 2079 / JCM 5827 / CCUG 10774 / NCTC 10582 / VPI-5482 / E50), this protein is Glutamate--tRNA ligase.